A 336-amino-acid polypeptide reads, in one-letter code: Torsin-1B (336 aa).

Residues 1–24 form the signal peptide; the sequence is MLRAGWLRGAAALALLLAARVVAA. N64 is a glycosylation site (N-linked (GlcNAc...) asparagine). 109 to 116 contacts ATP; sequence GWAGTGKN. N165 carries an N-linked (GlcNAc...) asparagine glycan.

This sequence belongs to the ClpA/ClpB family. Torsin subfamily. In terms of assembly, homohexamer. Interacts with TOR1A; the interaction may be specific of neural tissues. Interacts with TOR1AIP1; TOR1AIP1 is required for TOR1B location on the nuclear membrane. Interacts (ATP-bound) with TOR1AIP2; important for endoplasmic reticulum integrity. In terms of processing, N-glycosylated. As to expression, widely expressed with low levels in brain.

It is found in the endoplasmic reticulum lumen. The protein localises to the nucleus membrane. The catalysed reaction is ATP + H2O = ADP + phosphate + H(+). In terms of biological role, may serve as a molecular chaperone assisting in the proper folding of secreted and/or membrane proteins. Plays a role in non-neural cells nuclear envelope and endoplasmic reticulum integrity. May have a redundant function with TOR1A in non-neural tissues. This chain is Torsin-1B (TOR1B), found in Homo sapiens (Human).